The primary structure comprises 505 residues: MNETAWLDRVFSNTSLGHRLLDRLTLTNLRHAFYLISPYETTVESIDDVPNYNAEVSAWWLVFLTAEFFILFISGHEDRFALNDSITSICAGMLSQCFKFGGRAVAIFLYVIVWDNWRILELPWDSPWTWIFCLFFQDFMYYLGHRAVHEAGFFWGLHTIHHSSEYYNFSTALRQAAIQDAGLAIYDCIQAFFIPPSIFLVHRYFSEIFQFIMHTSLVDTMGPLGLVFNTPSHHRVHHGRNPYCIDKNYGGVFIIWDKMFNTFEAERHDDPPIYGLVTNENTFNQIYLQFHALWDILIFKGFTKDVKGEPMFPGVVNKLKATVFPPGWFPGVPVTPFFHWMSMVNPAHGVPEPEKPVLRYSPPARILVKVYVASSFLLLLAIFFHFEYDRNHLSYLDCTVKIAYFVVTMQCFGAFFDMKWYARYIEIARCCGVLIYYGVLMFDHIGAGTHRLFVISLHIMAIALWTTDVLVEKLSQCCSKNQSINPEKGDLERAPEIASISKNVQ.

2 consecutive transmembrane segments (helical) span residues 56–76 (VSAWWLVFLTAEFFILFISGH) and 104–124 (AVAIFLYVIVWDNWRILELPW). A Fatty acid hydroxylase domain is found at 130-262 (WIFCLFFQDF…FIIWDKMFNT (133 aa)). A Histidine box-1 motif is present at residues 145–149 (HRAVH). The Histidine box-2 motif lies at 158–162 (HTIHH). Residues 234–238 (HRVHH) carry the Histidine box-3 motif. 4 helical membrane passes run 366-386 (ILVKVYVASSFLLLLAIFFHF), 396-416 (LDCTVKIAYFVVTMQCFGAFF), 430-450 (CCGVLIYYGVLMFDHIGAGTH), and 452-472 (LFVISLHIMAIALWTTDVLVE).

It belongs to the sterol desaturase family. TMEM195 subfamily. Fe cation serves as cofactor.

Its subcellular location is the endoplasmic reticulum membrane. It carries out the reaction 1-O-(1,2-saturated-alkyl)-sn-glycerol + (6R)-L-erythro-5,6,7,8-tetrahydrobiopterin + O2 = a 1-(1-hydroxyalkyl)-sn-glycerol + (6R)-L-erythro-6,7-dihydrobiopterin + H2O. Glyceryl-ether monooxygenase that cleaves the O-alkyl bond of ether lipids. The sequence is that of Alkylglycerol monooxygenase from Caenorhabditis elegans.